We begin with the raw amino-acid sequence, 615 residues long: RNA polymerase sigma factor RpoD (615 aa).

The interval 177–215 is disordered; that stretch reads APTATHVGSELSQEDLDDDEDEDEEDGDDDAADDDNSID. A compositionally biased stretch (acidic residues) spans 188–214; the sequence is SQEDLDDDEDEDEEDGDDDAADDDNSI. Positions 381-451 are sigma-70 factor domain-2; the sequence is MVEANLRLVI…TRSIADQART (71 aa). Residues 405–408 carry the Interaction with polymerase core subunit RpoC motif; the sequence is DLIQ. The segment at 460 to 536 is sigma-70 factor domain-3; sequence ETINKLNRIS…DTTLELPLDS (77 aa). A sigma-70 factor domain-4 region spans residues 549–602; sequence VLAGLTAREAKVLRMRFGIDMNTDHTLEEVGKQFDVTRERIRQIEAKALRKLRH. A DNA-binding region (H-T-H motif) is located at residues 575-594; it reads LEEVGKQFDVTRERIRQIEA.

Belongs to the sigma-70 factor family. RpoD/SigA subfamily. Interacts transiently with the RNA polymerase catalytic core.

Its subcellular location is the cytoplasm. In terms of biological role, sigma factors are initiation factors that promote the attachment of RNA polymerase to specific initiation sites and are then released. This sigma factor is the primary sigma factor during exponential growth. In Salmonella typhi, this protein is RNA polymerase sigma factor RpoD.